Reading from the N-terminus, the 388-residue chain is (S)-8-oxocitronellyl enol synthase ISY1 (388 aa).

Residues 35–37 (TGI), 63–64 (RR), 81–82 (DV), 105–106 (TW), and Q143 contribute to the NADP(+) site. Catalysis depends on residues K147 and Y178. NADP(+) contacts are provided by residues Y178, I205, and 212–214 (SMM).

This sequence belongs to the short-chain dehydrogenases/reductases (SDR) family.

It carries out the reaction (S)-8-oxocitronellyl enol + NADP(+) = (6E)-8-oxogeranial + NADPH + H(+). The enzyme catalyses (S)-8-oxocitronellyl enol + NAD(+) = (6E)-8-oxogeranial + NADH + H(+). Functionally, iridoid synthase that catalyzes the first step in generation of the iridoid ring scaffold using the linear monoterpene (6E)-8-oxogeranial as substrate. Iridoids comprise a large family of distinctive bicyclic monoterpenes that possess a wide range of pharmacological activities, including anticancer, anti-inflammatory, antifungal and antibacterial activities. Catalyzes the conversion of the linear monoterpene (6E)-8-oxogeranial to (S)-8-oxocitronellyl enol, a precursor of nepetalactones, which are metabolites that are both insect-repellent and have euphoric effect in cats. The sequence is that of (S)-8-oxocitronellyl enol synthase ISY1 from Nepeta racemosa (Catmint).